Reading from the N-terminus, the 21-residue chain is SSANPQITRKRHKINSFVGLM.

Residues 1-21 are disordered; it reads SSANPQITRKRHKINSFVGLM. The residue at position 21 (Met21) is a Methionine amide.

It belongs to the tachykinin family.

It localises to the secreted. Functionally, tachykinins are active peptides which excite neurons, evoke behavioral responses, and contract (directly or indirectly) many smooth muscles. Is a potent vasoconstrictor and secretagogue that plays a regulatory role in the central control of ventilation, in particular, the heart rate variability (HRV). This is Neuropeptide gamma from Oncorhynchus mykiss (Rainbow trout).